The sequence spans 313 residues: Formimidoylglutamase (313 aa).

Mn(2+) contacts are provided by histidine 130, aspartate 155, histidine 157, aspartate 159, aspartate 241, and aspartate 243.

It belongs to the arginase family. It depends on Mn(2+) as a cofactor.

The catalysed reaction is N-formimidoyl-L-glutamate + H2O = formamide + L-glutamate. It functions in the pathway amino-acid degradation; L-histidine degradation into L-glutamate; L-glutamate from N-formimidoyl-L-glutamate (hydrolase route): step 1/1. In terms of biological role, catalyzes the conversion of N-formimidoyl-L-glutamate to L-glutamate and formamide. In Citrobacter koseri (strain ATCC BAA-895 / CDC 4225-83 / SGSC4696), this protein is Formimidoylglutamase.